A 245-amino-acid polypeptide reads, in one-letter code: Platelet-derived growth factor subunit B (245 aa).

An N-terminal signal peptide occupies residues 1 to 20 (MNRCWALFLSLCCYLRLVSA). Residues 21–81 (EGDPIPEELY…ELESLSRGRR (61 aa)) constitute a propeptide, removed in mature form. Asn-63 is a glycosylation site (N-linked (GlcNAc...) asparagine). Disulfide bonds link Cys-101–Cys-145, Cys-134–Cys-182, and Cys-138–Cys-184. The propeptide at 195–245 (RSPGSSQEQRARTPQTRVTIRTVRVRRPPKGKHQKFKHTHDKKALKETLGA) is removed in mature form. Basic residues predominate over residues 220–235 (RRPPKGKHQKFKHTHD). The interval 220–245 (RRPPKGKHQKFKHTHDKKALKETLGA) is disordered. Over residues 236-245 (KKALKETLGA) the composition is skewed to basic and acidic residues.

It belongs to the PDGF/VEGF growth factor family. Antiparallel homodimer; disulfide-linked. Antiparallel heterodimer with PDGFA; disulfide-linked. The PDGFB homodimer interacts with PDGFRA and PDGFRB homodimers, and with heterodimers formed by PDGFRA and PDGFRB. The heterodimer composed of PDGFA and PDGFB interacts with PDGFRB homodimers, and with heterodimers formed by PDGFRA and PDGFRB. Interacts with XLKD1. Interacts with LRP1. Interacts with SORL1 (via the N-terminal ectodomain). Interacts with CD82; this interaction inhibits PDGFB-mediated signaling pathway.

It is found in the secreted. In terms of biological role, growth factor that plays an essential role in the regulation of embryonic development, cell proliferation, cell migration, survival and chemotaxis. Potent mitogen for cells of mesenchymal origin. Required for normal proliferation and recruitment of pericytes and vascular smooth muscle cells in the central nervous system, skin, lung, heart and placenta. Required for normal blood vessel development, and for normal development of kidney glomeruli. Plays an important role in wound healing. Signaling is modulated by the formation of heterodimers with PDGFA. The chain is Platelet-derived growth factor subunit B (PDGFB) from Felis catus (Cat).